The sequence spans 531 residues: CTP synthase (531 aa).

The segment at 1–265 is amidoligase domain; the sequence is MAKYIFITGG…DRIITERLNL (265 aa). Ser13 is a CTP binding site. A UTP-binding site is contributed by Ser13. 14–19 is an ATP binding site; that stretch reads SLGKGI. L-glutamine is bound at residue Tyr54. Asp71 contributes to the ATP binding site. Positions 71 and 139 each coordinate Mg(2+). CTP-binding positions include 146–148, 186–191, and Lys222; these read DIE and KTKPTQ. UTP-binding positions include 186–191 and Lys222; that span reads KTKPTQ. A Glutamine amidotransferase type-1 domain is found at 290–529; that stretch reads NVALVGKYVE…IRACLEYKRK (240 aa). Gly349 is a binding site for L-glutamine. Cys376 serves as the catalytic Nucleophile; for glutamine hydrolysis. Residues 377-380, Glu400, and Arg457 each bind L-glutamine; that span reads LGMQ. Residues His502 and Glu504 contribute to the active site.

The protein belongs to the CTP synthase family. As to quaternary structure, homotetramer.

It catalyses the reaction UTP + L-glutamine + ATP + H2O = CTP + L-glutamate + ADP + phosphate + 2 H(+). It carries out the reaction L-glutamine + H2O = L-glutamate + NH4(+). The enzyme catalyses UTP + NH4(+) + ATP = CTP + ADP + phosphate + 2 H(+). Its pathway is pyrimidine metabolism; CTP biosynthesis via de novo pathway; CTP from UDP: step 2/2. Allosterically activated by GTP, when glutamine is the substrate; GTP has no effect on the reaction when ammonia is the substrate. The allosteric effector GTP functions by stabilizing the protein conformation that binds the tetrahedral intermediate(s) formed during glutamine hydrolysis. Inhibited by the product CTP, via allosteric rather than competitive inhibition. Functionally, catalyzes the ATP-dependent amination of UTP to CTP with either L-glutamine or ammonia as the source of nitrogen. Regulates intracellular CTP levels through interactions with the four ribonucleotide triphosphates. The polypeptide is CTP synthase (Aquifex aeolicus (strain VF5)).